The chain runs to 329 residues: MSAEPEGRRMLRLEVRNAQTPIERKPEWIKTRATMGPEYRQLHSLVKSEGLHTVCQEAGCPNIYECWEDREATFLIGGSQCTRRCDFCQIDTGKPAEFDRDEPRRVAESVARMGLRYSTVTGVARDDLEDEGAWLYAETIREIHRQSPGTGVEILVPDFSGDPELLGEVFGARPEVFAHNVETVPRIFKRIRPAFRYERSLDVIAQGRAAGLITKSNLILGMGEERQEISQALQDLHDAGTDIITITQYLRPSPRHLPVARWVRPDEFVELRDEAEAIGFLGVLAGPLVRSSYRAGRLWAQSMRAKGRTVPEELRHLADASLGFAQAVS.

[4Fe-4S] cluster contacts are provided by Cys55, Cys60, Cys66, Cys81, Cys85, Cys88, and Ser292. Residues 67 to 281 (WEDREATFLI…RDEAEAIGFL (215 aa)) enclose the Radical SAM core domain.

Belongs to the radical SAM superfamily. Lipoyl synthase family. The cofactor is [4Fe-4S] cluster.

It localises to the cytoplasm. The catalysed reaction is [[Fe-S] cluster scaffold protein carrying a second [4Fe-4S](2+) cluster] + N(6)-octanoyl-L-lysyl-[protein] + 2 oxidized [2Fe-2S]-[ferredoxin] + 2 S-adenosyl-L-methionine + 4 H(+) = [[Fe-S] cluster scaffold protein] + N(6)-[(R)-dihydrolipoyl]-L-lysyl-[protein] + 4 Fe(3+) + 2 hydrogen sulfide + 2 5'-deoxyadenosine + 2 L-methionine + 2 reduced [2Fe-2S]-[ferredoxin]. The protein operates within protein modification; protein lipoylation via endogenous pathway; protein N(6)-(lipoyl)lysine from octanoyl-[acyl-carrier-protein]: step 2/2. Functionally, catalyzes the radical-mediated insertion of two sulfur atoms into the C-6 and C-8 positions of the octanoyl moiety bound to the lipoyl domains of lipoate-dependent enzymes, thereby converting the octanoylated domains into lipoylated derivatives. In Leifsonia xyli subsp. xyli (strain CTCB07), this protein is Lipoyl synthase.